The primary structure comprises 262 residues: Large ribosomal subunit protein uL5c (262 aa).

Residues 1–39 (MASPSLLQSSASSFHGRFSPLAAPSSARMLSPPLRNVVK) constitute a chloroplast transit peptide.

This sequence belongs to the universal ribosomal protein uL5 family. In terms of assembly, part of the 50S ribosomal subunit; contacts the 5S rRNA.

It localises to the plastid. It is found in the chloroplast. Its function is as follows. Binds 5S rRNA, forms part of the central protuberance of the 50S subunit. The polypeptide is Large ribosomal subunit protein uL5c (RPL5) (Arabidopsis thaliana (Mouse-ear cress)).